We begin with the raw amino-acid sequence, 290 residues long: Probable prolyl 4-hydroxylase 8 (290 aa).

Residues 1–19 (MAKKPKQLRNKPRKSFSTQ) are Cytoplasmic-facing. A helical; Signal-anchor for type II membrane protein transmembrane segment spans residues 20–40 (TFTVVVLVLFVILILVGLGIF). Over 41–290 (SLPSTNKTSS…TKWFHVHEYN (250 aa)) the chain is Lumenal. Asn46 is a glycosylation site (N-linked (GlcNAc...) asparagine). In terms of domain architecture, Fe2OG dioxygenase spans 163 to 286 (NGEGLQVLHY…KWSSTKWFHV (124 aa)). Positions 181 and 183 each coordinate Fe cation. N-linked (GlcNAc...) asparagine glycosylation is present at Asn222. His267 lines the Fe cation pocket. Residue Lys277 participates in 2-oxoglutarate binding.

The protein belongs to the P4HA family. Requires Fe(2+) as cofactor. L-ascorbate serves as cofactor.

The protein localises to the endoplasmic reticulum membrane. It catalyses the reaction L-prolyl-[collagen] + 2-oxoglutarate + O2 = trans-4-hydroxy-L-prolyl-[collagen] + succinate + CO2. In terms of biological role, catalyzes the post-translational formation of 4-hydroxyproline in -Xaa-Pro-Gly- sequences in proline-rich peptide sequences of plant glycoproteins and other proteins. Hydroxyprolines are important constituent of many plant cell wall glycoproteins such as extensins, hydroxyproline-rich glycoproteins, lectins and arabinogalactan proteins. This is Probable prolyl 4-hydroxylase 8 from Arabidopsis thaliana (Mouse-ear cress).